The sequence spans 338 residues: Fe-S cluster assembly protein DRE2 (338 aa).

Residues 1-165 (MAKSGLLLIH…LPSFKKAANK (165 aa)) are N-terminal SAM-like domain. The segment at 166–232 (PLPTFKKKVE…DDLLNEEDAK (67 aa)) is linker. A disordered region spans residues 181-223 (VEARVHKAENDDDELEDEEDENLFDASRSKYFDEDDSESLDED). 2 stretches are compositionally biased toward acidic residues: residues 190-203 (NDDD…DENL) and 213-223 (DEDDSESLDED). [2Fe-2S] cluster-binding residues include Cys-242, Cys-253, Cys-256, and Cys-258. The segment at 242 to 258 (CGKSKTKKKKACKDCSC) is fe-S binding site A. Cys-301, Cys-304, Cys-312, and Cys-315 together coordinate [4Fe-4S] cluster. Short sequence motifs (cx2C motif) lie at residues 301–304 (CGSC) and 312–315 (CTGC). The tract at residues 301–315 (CGSCSLGDAFRCTGC) is fe-S binding site B.

It belongs to the anamorsin family. In terms of assembly, monomer. Interacts with TAH18. Interacts with MIA40. [2Fe-2S] cluster is required as a cofactor. It depends on [4Fe-4S] cluster as a cofactor.

The protein localises to the cytoplasm. The protein resides in the mitochondrion intermembrane space. In terms of biological role, component of the cytosolic iron-sulfur (Fe-S) protein assembly (CIA) machinery required for the maturation of extramitochondrial Fe-S proteins. Part of an electron transfer chain functioning in an early step of cytosolic Fe-S biogenesis, facilitating the de novo assembly of a [4Fe-4S] cluster on the scaffold complex CFD1-NBP35. Electrons are transferred to DRE2 from NADPH via the FAD- and FMN-containing protein TAH18. TAH18-DRE2 are also required for the assembly of the diferric tyrosyl radical cofactor of ribonucleotide reductase (RNR), probably by providing electrons for reduction during radical cofactor maturation in the catalytic small subunit RNR2. This chain is Fe-S cluster assembly protein DRE2, found in Candida glabrata (strain ATCC 2001 / BCRC 20586 / JCM 3761 / NBRC 0622 / NRRL Y-65 / CBS 138) (Yeast).